Reading from the N-terminus, the 699-residue chain is Fervidolysin (699 aa).

A signal peptide spans 1–21; the sequence is MRKVLLIASIVALILALFSCA. A propeptide spanning residues 22–149 is cleaved from the precursor; the sequence is NPSFEPRSKA…MYKIRKPGLN (128 aa). Position 157 (glutamate 157) interacts with Ca(2+). Positions 163–465 constitute a Peptidase S8 domain; it reads LWGLEAIGVT…YGLVKLDAAL (303 aa). Aspartate 190 (charge relay system) is an active-site residue. Aspartate 199 lines the Ca(2+) pocket. Histidine 228 (charge relay system) is an active-site residue. Positions 239, 241, 243, and 245 each coordinate Ca(2+). The active-site Charge relay system is the serine 409.

This sequence belongs to the peptidase S8 family. In terms of processing, undergoes auto-proteolytic processing. Once cleaved, the propeptide can remain associated with the protease and blocks its activity. The physiological activation of fervidolysin is proposed to be achieved through the stepwise removal of the propeptide accomplished by several proteolytic cleavages that may not be autolytic.

It localises to the cell surface. Is inhibited by phenylmethylsulfonyl fluoride and 3,4-dichloroisocoumarin. EDTA and iodoacetate (1 to 5 mM) have only little effect on the enzyme activity. Its function is as follows. Protease able to degrade keratin into peptides. Is responsible for keratinolysis by F.pennivorans, which allows this bacterium to grow on native feathers. This Fervidobacterium pennivorans protein is Fervidolysin.